The following is a 130-amino-acid chain: Small ribosomal subunit protein uS9 (130 aa).

Residues 105-130 (TRDPRMKERKKYGLKKARRAPQFSKR) are disordered. The segment covering 111–130 (KERKKYGLKKARRAPQFSKR) has biased composition (basic residues).

Belongs to the universal ribosomal protein uS9 family.

The polypeptide is Small ribosomal subunit protein uS9 (Acetivibrio thermocellus (strain ATCC 27405 / DSM 1237 / JCM 9322 / NBRC 103400 / NCIMB 10682 / NRRL B-4536 / VPI 7372) (Clostridium thermocellum)).